We begin with the raw amino-acid sequence, 142 residues long: UPF0102 protein PsycPRwf_0497 (142 aa).

Belongs to the UPF0102 family.

This Psychrobacter sp. (strain PRwf-1) protein is UPF0102 protein PsycPRwf_0497.